The following is a 140-amino-acid chain: 3-hydroxyacyl-[acyl-carrier-protein] dehydratase FabZ (140 aa).

His47 is a catalytic residue.

This sequence belongs to the thioester dehydratase family. FabZ subfamily.

It is found in the cytoplasm. It catalyses the reaction a (3R)-hydroxyacyl-[ACP] = a (2E)-enoyl-[ACP] + H2O. Functionally, involved in unsaturated fatty acids biosynthesis. Catalyzes the dehydration of short chain beta-hydroxyacyl-ACPs and long chain saturated and unsaturated beta-hydroxyacyl-ACPs. This chain is 3-hydroxyacyl-[acyl-carrier-protein] dehydratase FabZ, found in Streptococcus agalactiae serotype III (strain NEM316).